Here is an 809-residue protein sequence, read N- to C-terminus: LPS-assembly protein LptD (809 aa).

The signal sequence occupies residues 1 to 22 (MRRALRLLPLPLSIAICLPAMA).

The protein belongs to the LptD family. As to quaternary structure, component of the lipopolysaccharide transport and assembly complex. Interacts with LptE and LptA.

It is found in the cell outer membrane. Its function is as follows. Together with LptE, is involved in the assembly of lipopolysaccharide (LPS) at the surface of the outer membrane. The polypeptide is LPS-assembly protein LptD (Xanthomonas campestris pv. campestris (strain 8004)).